The sequence spans 505 residues: Deoxyguanosinetriphosphate triphosphohydrolase (505 aa).

The HD domain maps to 66-273 (RLTHSMEVQQ…MEAADDISYC (208 aa)).

This sequence belongs to the dGTPase family. Type 1 subfamily. In terms of assembly, homotetramer. Mg(2+) is required as a cofactor.

It carries out the reaction dGTP + H2O = 2'-deoxyguanosine + triphosphate + H(+). Its function is as follows. dGTPase preferentially hydrolyzes dGTP over the other canonical NTPs. In Escherichia coli O157:H7, this protein is Deoxyguanosinetriphosphate triphosphohydrolase.